The primary structure comprises 118 residues: MARVKRGVTTHARHKKVLKQSKGFVGRSSTNYRIALERLEKALRYAYRDRRNKKREFRALWIQRINAAVREQGMTYSQFIAALKAANIELDRKVLAAMAFDDPAGFTAIVEAAKAVRG.

This sequence belongs to the bacterial ribosomal protein bL20 family.

Binds directly to 23S ribosomal RNA and is necessary for the in vitro assembly process of the 50S ribosomal subunit. It is not involved in the protein synthesizing functions of that subunit. In Acidiphilium cryptum (strain JF-5), this protein is Large ribosomal subunit protein bL20.